The sequence spans 325 residues: DNA repair and recombination protein RadA (325 aa).

107-114 (GEFGSGKT) serves as a coordination point for ATP.

The protein belongs to the eukaryotic RecA-like protein family.

Involved in DNA repair and in homologous recombination. Binds and assemble on single-stranded DNA to form a nucleoprotein filament. Hydrolyzes ATP in a ssDNA-dependent manner and promotes DNA strand exchange between homologous DNA molecules. In Methanosarcina barkeri (strain Fusaro / DSM 804), this protein is DNA repair and recombination protein RadA.